Here is a 969-residue protein sequence, read N- to C-terminus: Lateral signaling target protein 2 homolog (969 aa).

A Glycyl lysine isopeptide (Lys-Gly) (interchain with G-Cter in ubiquitin) cross-link involves residue Lys-87. Disordered regions lie at residues 290-323 (QDGE…GVEE), 336-360 (SVWK…EEPI), 390-437 (STLL…YHDD), and 715-777 (RSEC…DMSE). Positions 295–310 (PTSSTNDPSASTGPDS) are enriched in polar residues. The segment covering 336 to 346 (SVWKEEEEKQV) has biased composition (basic and acidic residues). The span at 391-402 (TLLSPPSQNQSP) shows a compositional bias: polar residues. Positions 411–423 (GSSLEGSSATSST) are enriched in low complexity. Over residues 715-729 (RSECFGKQSKDDNRK) the composition is skewed to basic and acidic residues. Composition is skewed to low complexity over residues 732–745 (SSSQ…VPSS) and 756–769 (SLSS…VSSL). The FYVE-type zinc-finger motif lies at 899 to 959 (DEACNSCIAC…VCTHCYMFHV (61 aa)). Residues Cys-905, Cys-908, Cys-921, Cys-924, Cys-929, Cys-932, Cys-951, and Cys-954 each coordinate Zn(2+).

The protein belongs to the lst-2 family. In terms of processing, monoubiquitination at Lys-87 prevents binding to phosphatidylinositol 3-phosphate (PI3P) and localization to early endosome membranes.

Its subcellular location is the cytoplasm. It is found in the cytosol. The protein resides in the early endosome membrane. Negative regulator of epidermal growth factor receptor (EGFR) signaling. Acts by promoting EGFR degradation in endosomes when not monoubiquitinated. The chain is Lateral signaling target protein 2 homolog (zfyve28) from Danio rerio (Zebrafish).